The following is a 158-amino-acid chain: uncharacterized protein (158 aa).

It belongs to the mimivirus L223/L227/L812 family.

This is an uncharacterized protein from Acanthamoeba polyphaga mimivirus (APMV).